Consider the following 331-residue polypeptide: Protein PER1 homolog (331 aa).

An N-terminal signal peptide occupies residues methionine 1–alanine 24. Residues serine 25 to arginine 100 lie on the Lumenal side of the membrane. Residues valine 101–tyrosine 121 form a helical membrane-spanning segment. The Cytoplasmic segment spans residues asparagine 122 to arginine 139. A helical transmembrane segment spans residues leucine 140 to isoleucine 160. Over arginine 161–lysine 168 the chain is Lumenal. A helical membrane pass occupies residues leucine 169 to methionine 189. Residues leucine 190–lysine 199 lie on the Cytoplasmic side of the membrane. A helical membrane pass occupies residues leucine 200 to leucine 220. Over serine 221 to lysine 232 the chain is Lumenal. The helical transmembrane segment at alanine 233–tryptophan 250 threads the bilayer. Residues serine 251–proline 263 are Cytoplasmic-facing. Residues alanine 264–isoleucine 284 form a helical membrane-spanning segment. Topologically, residues alanine 285–aspartate 289 are lumenal. A helical transmembrane segment spans residues alanine 290 to valine 310. The Cytoplasmic portion of the chain corresponds to arginine 311–arginine 331.

It belongs to the PGAP3/PER1 family.

The protein localises to the endoplasmic reticulum membrane. It localises to the vacuole membrane. Involved in the lipid remodeling steps of GPI-anchor maturation. Lipid remodeling steps consist in the generation of 2 saturated fatty chains at the sn-2 position of GPI-anchors proteins. Required for phospholipase A2 activity that removes an acyl-chain at the sn-2 position of GPI-anchors during the remodeling of GPI. Required for efficient transport of GPI-anchor proteins. This chain is Protein PER1 homolog, found in Schizosaccharomyces pombe (strain 972 / ATCC 24843) (Fission yeast).